We begin with the raw amino-acid sequence, 628 residues long: DNA mismatch repair protein MutL (628 aa).

Positions 332–416 are disordered; it reads PTSAMPAPGN…ASTAPPLSEE (85 aa). The span at 375-396 shows a compositional bias: polar residues; that stretch reads EGSSRSDVPYPSASQVTETTDS.

The protein belongs to the DNA mismatch repair MutL/HexB family.

This protein is involved in the repair of mismatches in DNA. It is required for dam-dependent methyl-directed DNA mismatch repair. May act as a 'molecular matchmaker', a protein that promotes the formation of a stable complex between two or more DNA-binding proteins in an ATP-dependent manner without itself being part of a final effector complex. The chain is DNA mismatch repair protein MutL from Syntrophotalea carbinolica (strain DSM 2380 / NBRC 103641 / GraBd1) (Pelobacter carbinolicus).